Reading from the N-terminus, the 159-residue chain is 2-C-methyl-D-erythritol 2,4-cyclodiphosphate synthase (159 aa).

2 residues coordinate a divalent metal cation: Asp-10 and His-12. Residues 10–12 (DVH) and 36–37 (HS) contribute to the 4-CDP-2-C-methyl-D-erythritol 2-phosphate site. Position 44 (His-44) interacts with a divalent metal cation. 4-CDP-2-C-methyl-D-erythritol 2-phosphate is bound by residues 58–60 (DIG), 63–67 (FPDTD), 102–108 (AQAPKMA), 134–137 (TTTE), Phe-141, 141–144 (FTGR), and Arg-144.

This sequence belongs to the IspF family. In terms of assembly, homotrimer. The cofactor is a divalent metal cation.

The enzyme catalyses 4-CDP-2-C-methyl-D-erythritol 2-phosphate = 2-C-methyl-D-erythritol 2,4-cyclic diphosphate + CMP. Its pathway is isoprenoid biosynthesis; isopentenyl diphosphate biosynthesis via DXP pathway; isopentenyl diphosphate from 1-deoxy-D-xylulose 5-phosphate: step 4/6. In terms of biological role, involved in the biosynthesis of isopentenyl diphosphate (IPP) and dimethylallyl diphosphate (DMAPP), two major building blocks of isoprenoid compounds. Catalyzes the conversion of 4-diphosphocytidyl-2-C-methyl-D-erythritol 2-phosphate (CDP-ME2P) to 2-C-methyl-D-erythritol 2,4-cyclodiphosphate (ME-CPP) with a corresponding release of cytidine 5-monophosphate (CMP). In Shewanella oneidensis (strain ATCC 700550 / JCM 31522 / CIP 106686 / LMG 19005 / NCIMB 14063 / MR-1), this protein is 2-C-methyl-D-erythritol 2,4-cyclodiphosphate synthase.